The following is a 32-amino-acid chain: Photosystem I reaction center subunit XII (32 aa).

Residues 9–28 traverse the membrane as a helical segment; it reads VYIALVVALIPGLLAWRLAT.

This sequence belongs to the PsaM family.

It is found in the cellular thylakoid membrane. The chain is Photosystem I reaction center subunit XII from Nostoc sp. (strain PCC 7120 / SAG 25.82 / UTEX 2576).